We begin with the raw amino-acid sequence, 216 residues long: Probable nicotinate-nucleotide adenylyltransferase (216 aa).

It belongs to the NadD family.

The catalysed reaction is nicotinate beta-D-ribonucleotide + ATP + H(+) = deamido-NAD(+) + diphosphate. Its pathway is cofactor biosynthesis; NAD(+) biosynthesis; deamido-NAD(+) from nicotinate D-ribonucleotide: step 1/1. Catalyzes the reversible adenylation of nicotinate mononucleotide (NaMN) to nicotinic acid adenine dinucleotide (NaAD). This chain is Probable nicotinate-nucleotide adenylyltransferase, found in Klebsiella pneumoniae subsp. pneumoniae (strain ATCC 700721 / MGH 78578).